We begin with the raw amino-acid sequence, 334 residues long: ELMO domain-containing protein 1 (334 aa).

Residues 133 to 314 (QHEEMLLKLW…KFRKRIIKQL (182 aa)) form the ELMO domain.

In terms of biological role, acts as a GTPase-activating protein (GAP) toward guanine nucleotide exchange factors like ARL2, ARL3, ARF1 and ARF6, but not for GTPases outside the Arf family. In Homo sapiens (Human), this protein is ELMO domain-containing protein 1 (ELMOD1).